Consider the following 412-residue polypeptide: Adenosine receptor A2a (412 aa).

Residues 1-7 (MPIMGSS) lie on the Extracellular side of the membrane. The chain crosses the membrane as a helical span at residues 8 to 32 (VYITVELAIAVLAILGNVLVCWAVW). The Cytoplasmic segment spans residues 33–42 (LNSNLQNVTN). Residues 43–66 (YFVVSLAAADIAVGVLAIPFAITI) form a helical membrane-spanning segment. At 67-77 (STGFCAACHGC) the chain is on the extracellular side. 3 disulfide bridges follow: cysteine 71/cysteine 159, cysteine 74/cysteine 146, and cysteine 77/cysteine 166. Residues 78 to 100 (LFIACFVLVLTQSSIFSLLAIAI) form a helical membrane-spanning segment. Over 101-120 (DRYIAIRIPLRYNGLVTGTR) the chain is Cytoplasmic. A helical transmembrane segment spans residues 121 to 143 (AKGIIAICWVLSFAIGLTPMLGW). Residues 144-173 (NNCGQPKEGKNHSQGCGEGQVACLFEDVVP) are Extracellular-facing. N-linked (GlcNAc...) asparagine glycosylation is present at asparagine 154. Residue glutamate 169 participates in adenosine binding. Residues 174 to 198 (MNYMVYFNFFACVLVPLLLMLGVYL) form a helical membrane-spanning segment. Residues 199 to 234 (RIFLAARRQLKQMESQPLPGERARSTLQKEVHAAKS) are Cytoplasmic-facing. A helical transmembrane segment spans residues 235 to 258 (LAIIVGLFALCWLPLHIINCFTFF). Asparagine 253 serves as a coordination point for adenosine. A disulfide bridge links cysteine 259 with cysteine 262. Residues 259 to 266 (CPDCSHAP) are Extracellular-facing. A helical membrane pass occupies residues 267 to 290 (LWLMYLAIVLSHTNSVVNPFIYAY). Adenosine is bound by residues serine 277 and histidine 278. Residues 291–412 (RIREFRQTFR…PLAQDGAGVS (122 aa)) lie on the Cytoplasmic side of the membrane. The segment at 391 to 412 (KGVCPEPPGLDDPLAQDGAGVS) is disordered.

This sequence belongs to the G-protein coupled receptor 1 family. In terms of assembly, interacts (via cytoplasmic C-terminal domain) with USP4; the interaction is direct. May interact with DRD4. Interacts with NECAB2. Interacts (via cytoplasmic C-terminal domain) with GAS2L2; interaction enhances receptor-mediated adenylyl cyclase activity. Post-translationally, ubiquitinated. Deubiquitinated by USP4; leading to stabilization and expression at the cell surface.

Its subcellular location is the cell membrane. Its function is as follows. Receptor for adenosine. The activity of this receptor is mediated by G proteins which activate adenylyl cyclase. The protein is Adenosine receptor A2a (ADORA2A) of Homo sapiens (Human).